A 1463-amino-acid polypeptide reads, in one-letter code: Kinesin-like protein KIF15 (1463 aa).

A Kinesin motor domain is found at 18–354 (AIKVFVRVRP…LKFARRAKMI (337 aa)). Residue 99–106 (GQTGSGKT) coordinates ATP. A disordered region spans residues 387–424 (AEGSIPRGPSESGDSQMSNSSTESNGPVSGQQSGSSSS). A compositionally biased stretch (polar residues) spans 398–414 (SGDSQMSNSSTESNGPV). Residues 415–424 (SGQQSGSSSS) are compositionally biased toward low complexity. Coiled-coil stretches lie at residues 436-517 (SLRD…LEHN) and 586-646 (TSTL…QGMK). 3 disordered regions span residues 686-720 (AGEETPGGPGFAGLSDNGSPLRSHSTNSLPPSGDI), 1335-1356 (FKEKEDIKSKLEEEREEKSKLT), and 1409-1444 (QLGKAQSDSEQMKRDYEALQKRLTSSSAEPPEEAGA). Positions 701–715 (DNGSPLRSHSTNSLP) are enriched in polar residues. A compositionally biased stretch (basic and acidic residues) spans 1418–1428 (EQMKRDYEALQ).

This sequence belongs to the TRAFAC class myosin-kinesin ATPase superfamily. Kinesin family. KLP2 subfamily. Homodimer.

Its subcellular location is the cytoplasm. It is found in the cytoskeleton. The protein resides in the spindle. Plus-end directed kinesin-like motor enzyme involved in mitotic spindle assembly. Plays a role in positioning spindle poles during mitosis, specifically at prometaphase. The protein is Kinesin-like protein KIF15 (KIF15) of Strongylocentrotus purpuratus (Purple sea urchin).